The chain runs to 369 residues: 2-aminoethylphosphonate--pyruvate transaminase (369 aa).

Lys193 is subject to N6-(pyridoxal phosphate)lysine.

The protein belongs to the class-V pyridoxal-phosphate-dependent aminotransferase family. PhnW subfamily. As to quaternary structure, homodimer. The cofactor is pyridoxal 5'-phosphate.

The enzyme catalyses (2-aminoethyl)phosphonate + pyruvate = phosphonoacetaldehyde + L-alanine. Functionally, involved in phosphonate degradation. This is 2-aminoethylphosphonate--pyruvate transaminase from Burkholderia pseudomallei (strain 668).